Here is a 211-residue protein sequence, read N- to C-terminus: Troponin I, cardiac muscle (211 aa).

An N-acetylalanine modification is found at Ala1. The disordered stretch occupies residues 1–43 (ADESRDAAGEARPAPAPVRRRSSANYRAYATEPHAKSKKKISA). Phosphoserine is present on Ser4. Ser22 carries the post-translational modification Phosphoserine; by PHK, PKA and PKD/PRKD1. Residue Ser23 is modified to Phosphoserine; by PKA and PKD/PRKD1. At Tyr26 the chain carries Phosphotyrosine. Thr31 is subject to Phosphothreonine; by STK4/MST1. Residues 32–79 (EPHAKSKKKISASRKLQLKTLMLQIAKQELEREAEERRGEKGRALSTR) form an involved in binding TNC region. Phosphoserine; by PKC/PRKCE occurs at positions 42 and 44. Thr51 is subject to Phosphothreonine; by STK4/MST1. Ser77 carries the post-translational modification Phosphoserine. Thr78 carries the phosphothreonine modification. Thr129 and Thr143 each carry phosphothreonine; by STK4/MST1. Residues 129 to 150 (TQKIFDLRGKFKRPTLRLRVRI) are involved in binding TNC and actin. Ser151 is subject to Phosphoserine; by PAK3. Thr182 carries the phosphothreonine modification. Ser200 is modified (phosphoserine).

Belongs to the troponin I family. As to quaternary structure, interacts with TRIM63. Binds to actin and tropomyosin. Interacts with STK4/MST1. In terms of processing, phosphorylated at Ser-22 and Ser-23 by PRKD1; phosphorylation reduces myofilament calcium sensitivity. Phosphorylated preferentially at Thr-31. Phosphorylation by STK4/MST1 alters its binding affinity to TNNC1 (cardiac Tn-C) and TNNT2 (cardiac Tn-T). Phosphorylated at Ser-42 and Ser-44 by PRKCE; phosphorylation increases myocardium contractile dysfunction. Ser-22 is one of three sites in the region of residues 1-48 that are phosphorylated by phosphorylase kinase.

Its function is as follows. Troponin I is the inhibitory subunit of troponin, the thin filament regulatory complex which confers calcium-sensitivity to striated muscle actomyosin ATPase activity. This Oryctolagus cuniculus (Rabbit) protein is Troponin I, cardiac muscle (TNNI3).